We begin with the raw amino-acid sequence, 75 residues long: U6-lycotoxin-Ls1d (75 aa).

The N-terminal stretch at 1–21 is a signal peptide; that stretch reads MKLLLFTALVLVVISLIEVEA. A propeptide spanning residues 22-25 is cleaved from the precursor; it reads ENER.

Belongs to the neurotoxin 19 (CSTX) family. 06 (U6-Lctx) subfamily. Contains 4 disulfide bonds. Expressed by the venom gland.

The protein localises to the secreted. The protein is U6-lycotoxin-Ls1d of Lycosa singoriensis (Wolf spider).